The chain runs to 263 residues: Aquaporin-8 (263 aa).

The Cytoplasmic portion of the chain corresponds to 1 to 38; the sequence is MSGEQTPMCSMDLREIKGKETNMADSYHGMSWYEQYIQ. A helical transmembrane segment spans residues 39–59; sequence PCVVELLGSALFIFIGCLSVI. Residue cysteine 55 is modified to Cysteine persulfide. Cysteine sulfenic acid (-SOH) is present on cysteine 55. At 60–86 the chain is on the extracellular side; the sequence is ENSPNTGLLQPALAHGLALGLIIATLG. A helical transmembrane segment spans residues 87–107; it reads NISGGHFNPAVSLAVTLVGGL. The NPA 1 signature appears at 94–96; sequence NPA. Residues 108 to 109 lie on the Cytoplasmic side of the membrane; that stretch reads KT. Residues 110-130 traverse the membrane as a helical segment; sequence MLLIPYWVSQLFGGMIGAALA. Residues 131 to 158 lie on the Extracellular side of the membrane; sequence KVVSPEERFWNASGAAFAIVQEQEQVAE. N-linked (GlcNAc...) asparagine glycosylation is present at asparagine 141. A helical membrane pass occupies residues 159–179; sequence ALGVEIVMTMLLVLAVCMGAV. Topologically, residues 180–185 are cytoplasmic; sequence NEKTMG. The chain crosses the membrane as a helical span at residues 186 to 206; that stretch reads PLAPFSIGFSVIVDILAGGGI. The Extracellular portion of the chain corresponds to 207–230; that stretch reads SGACMNPARAFGPAVMAGYWDFHW. Residues 212 to 214 carry the NPA 2 motif; that stretch reads NPA. The helical transmembrane segment at 231–251 threads the bilayer; it reads IYWLGPLLAGLFVGLLIRLFI. Residues 252 to 263 are Cytoplasmic-facing; the sequence is GDEKTRLILKSR.

This sequence belongs to the MIP/aquaporin (TC 1.A.8) family. N-glycosylated. Post-translationally, sulfenylation at Cys-55(C55-SOH) when hydrogen peroxide flows through the AQP8 channel, making it susceptible to hydrogen sulfide produced by CBS. In terms of processing, persulfidation at Cys-55 is required to gate AQP8 channel; under stress condition, hydrogen peroxide accumulates in the cell leading to CBS activation that produces hydrogen sulfide inducing persulfidation of oxidized Cys-55 (C55-SOH). As to expression, highly expressed in sperm, pancreas and liver. Expressed in hepatocytes, acinal cells of pancreas and salivary gland, and absorptive colonic epithelial cells. Expressed in the myoepithelium of submandibular and parotid glands. Expressed in pancreatic beta-cells. Expressed in testis but not in epididymis. Expressed in small intestine.

It is found in the cell membrane. Its subcellular location is the mitochondrion inner membrane. The protein localises to the apical cell membrane. It localises to the basolateral cell membrane. The protein resides in the smooth endoplasmic reticulum membrane. The enzyme catalyses H2O(in) = H2O(out). The catalysed reaction is NH4(+)(in) = NH4(+)(out). It carries out the reaction H2O2(out) = H2O2(in). It catalyses the reaction formamide(out) = formamide(in). The enzyme catalyses methylamine(out) = methylamine(in). Its activity is regulated as follows. Reversibly gated by a two-step sulfenylation-persulfidation process in cells undergoing diverse stresses. Its function is as follows. Channel that allows the facilitated permeation of water and uncharged molecules, such as hydrogen peroxide and the neutral form of ammonia (NH3), through cellular membranes such as plasma membrane, inner mitochondrial membrane and endoplasmic reticulum membrane of several tissues. The transport of ammonia neutral form induces a parallel transport of proton, at alkaline pH when the concentration of ammonia is high. However, it is unclear whether the transport of proton takes place via the aquaporin or via an endogenous pathway. Also, may transport ammonia analogs such as formamide and methylamine, a transport favourited at basic pH due to the increase of unprotonated (neutral) form, which is expected to favor diffusion. Does not transport urea or glycerol. The water transport mechanism is mercury- and copper-sensitive and passive in response to osmotic driving forces. At the canicular plasma membrane, mediates the osmotic transport of water toward the bile canaliculus and facilitates the cAMP-induced bile canalicular water secretion, a process involved in bile formation. In addition, mediates the hydrogen peroxide release from hepatocyte mitochondria that modulates the SREBF2-mediated cholesterol synthesis and facilitates the mitochondrial ammonia uptake which is metabolized into urea, mainly under glucagon stimulation. In B cells, transports the CYBB-generated hydrogen peroxide from the external leaflet of the plasma membrane to the cytosol to promote B cell activation and differentiation for signal amplification. In the small intestine and colon system, mediates water transport through mitochondria and apical membrane of epithelial cells. May play an important role in the adaptive response of proximal tubule cells to acidosis possibly facilitating mitochondrial ammonia transport. The protein is Aquaporin-8 of Rattus norvegicus (Rat).